The chain runs to 360 residues: BLOC-1-related complex subunit 6 (360 aa).

Residues M1–T201 are disordered. The span at A23–P33 shows a compositional bias: polar residues. T41 bears the Phosphothreonine mark. Phosphoserine is present on S130. Residues E144 to A155 are compositionally biased toward acidic residues. S173 carries the post-translational modification Phosphoserine. Gly residues predominate over residues G179 to R198. The residue at position 201 (T201) is a Phosphothreonine. Residue S204 is modified to Phosphoserine.

This sequence belongs to the BORCS6 family. Component of the BLOC-one-related complex (BORC) which is composed of BLOC1S1, BLOC1S2, BORCS5, BORCS6, BORCS7, BORCS8, KXD1 and SNAPIN.

It localises to the lysosome membrane. Functionally, as part of the BORC complex may play a role in lysosomes movement and localization at the cell periphery. Associated with the cytosolic face of lysosomes, the BORC complex may recruit ARL8B and couple lysosomes to microtubule plus-end-directed kinesin motor. In Mus musculus (Mouse), this protein is BLOC-1-related complex subunit 6.